A 669-amino-acid polypeptide reads, in one-letter code: Collagen alpha-1(II) chain (669 aa).

P3 and P12 each carry 4-hydroxyproline. Residues 318 to 327 (XXXXXXXGAP) show a composition bias toward low complexity. Disordered stretches follow at residues 318–360 (XXXX…XXXX), 405–438 (XXXX…XXXX), and 638–669 (XXGF…AGPR). A 4-hydroxyproline mark is found at P336 and P345. Composition is skewed to low complexity over residues 339–360 (AGFA…XXXX) and 405–420 (XXXX…NGNP). P413 carries the post-translational modification 3-hydroxyproline. 4-hydroxyproline is present on residues P414, P420, and P426. Composition is skewed to low complexity over residues 429-438 (AGKXXXXXXX) and 638-647 (XXGFTGLQGL). 4-hydroxyproline is present on P648. At P650 the chain carries 3-hydroxyproline.

This sequence belongs to the fibrillar collagen family. Homotrimers of alpha 1(II) chains. Contains mostly 4-hydroxyproline. Prolines at the third position of the tripeptide repeating unit (G-X-P) are 4-hydroxylated in some or all of the chains. Post-translationally, contains 3-hydroxyproline at a few sites. This modification occurs on the first proline residue in the sequence motif Gly-Pro-Hyp, where Hyp is 4-hydroxyproline.

It localises to the secreted. The protein localises to the extracellular space. It is found in the extracellular matrix. Type II collagen is specific for cartilaginous tissues. It is essential for the normal embryonic development of the skeleton, for linear growth and for the ability of cartilage to resist compressive forces. The protein is Collagen alpha-1(II) chain of Mammut americanum (American mastodon).